Here is a 317-residue protein sequence, read N- to C-terminus: Melanocyte-stimulating hormone receptor (317 aa).

Residues 1-37 (MPVQGSQRRLLGSLNSTPTATPRLGLAANQTGARCLE) lie on the Extracellular side of the membrane. A glycan (N-linked (GlcNAc...) asparagine) is linked at N29. A helical transmembrane segment spans residues 38 to 63 (VSIPDGLFLSLGLVSLVENVLVVVAI). The Cytoplasmic segment spans residues 64-72 (ARNRNLHSP). Residues 73-93 (MYCFICCLALSDLLVSGSNML) form a helical membrane-spanning segment. Over 94–118 (ETAVFLLLEAGALAARAAVVQQLDN) the chain is Extracellular. The chain crosses the membrane as a helical span at residues 119-140 (VIDVITCSSMLSSLCFLGAIAV). At 141 to 163 (DRYISIFYALRYHSIVTLRRARR) the chain is on the cytoplasmic side. The helical transmembrane segment at 164–183 (VVAAIWVASVLFSTLFIAYC) threads the bilayer. The Extracellular portion of the chain corresponds to 184–191 (DHAAVLLC). The helical transmembrane segment at 192 to 211 (LVVFFLAMLVLMAVLYVHML) threads the bilayer. Over 212–240 (ARACQHAQGIAQLHKRQRPAHQGVGLKGA) the chain is Cytoplasmic. The helical transmembrane segment at 241 to 266 (ATLTILLGIFFLCWGPFFLHLTLIVL) threads the bilayer. Residues 267–279 (CPQHPTCSCIFKN) are Extracellular-facing. The chain crosses the membrane as a helical span at residues 280-300 (FNLFLTLIICNAIIDPLIYAF). The Cytoplasmic portion of the chain corresponds to 301–317 (RSQELRRTLKKVLLCSW). C315 carries the S-palmitoyl cysteine lipid modification.

Belongs to the G-protein coupled receptor 1 family. Interacts with MGRN1, but does not undergo MGRN1-mediated ubiquitination; this interaction competes with GNAS-binding and thus inhibits agonist-induced cAMP production. Interacts with OPN3; the interaction results in a decrease in MC1R-mediated cAMP signaling and ultimately a decrease in melanin production in melanocytes.

The protein localises to the cell membrane. Functionally, receptor for MSH (alpha, beta and gamma) and ACTH. The activity of this receptor is mediated by G proteins which activate adenylate cyclase. Mediates melanogenesis, the production of eumelanin (black/brown) and phaeomelanin (red/yellow), via regulation of cAMP signaling in melanocytes. The chain is Melanocyte-stimulating hormone receptor (MC1R) from Trachypithecus obscurus (Dusky leaf-monkey).